Consider the following 285-residue polypeptide: Glutamate racemase (285 aa).

Substrate is bound by residues 28–29 (DS) and 60–61 (YG). Residue Cys92 is the Proton donor/acceptor of the active site. 93 to 94 (NT) is a binding site for substrate. Cys204 acts as the Proton donor/acceptor in catalysis. 205–206 (TH) contributes to the substrate binding site.

This sequence belongs to the aspartate/glutamate racemases family.

The enzyme catalyses L-glutamate = D-glutamate. Its pathway is cell wall biogenesis; peptidoglycan biosynthesis. Functionally, provides the (R)-glutamate required for cell wall biosynthesis. The polypeptide is Glutamate racemase (Escherichia coli (strain UTI89 / UPEC)).